The primary structure comprises 406 residues: Tryptophan synthase beta chain (406 aa).

K99 bears the N6-(pyridoxal phosphate)lysine mark.

This sequence belongs to the TrpB family. As to quaternary structure, tetramer of two alpha and two beta chains. Requires pyridoxal 5'-phosphate as cofactor.

The enzyme catalyses (1S,2R)-1-C-(indol-3-yl)glycerol 3-phosphate + L-serine = D-glyceraldehyde 3-phosphate + L-tryptophan + H2O. It participates in amino-acid biosynthesis; L-tryptophan biosynthesis; L-tryptophan from chorismate: step 5/5. The beta subunit is responsible for the synthesis of L-tryptophan from indole and L-serine. The sequence is that of Tryptophan synthase beta chain from Rhizobium meliloti (strain 1021) (Ensifer meliloti).